The primary structure comprises 694 residues: Elongation factor G (694 aa).

The tr-type G domain maps to 9–288; that stretch reads SKIRNIGIMA…VIVKWLPSPK (280 aa). GTP is bound by residues 18–25, 82–86, and 136–139; these read AHIDAGKT, DTPGH, and NKMD.

The protein belongs to the TRAFAC class translation factor GTPase superfamily. Classic translation factor GTPase family. EF-G/EF-2 subfamily.

The protein localises to the cytoplasm. Its function is as follows. Catalyzes the GTP-dependent ribosomal translocation step during translation elongation. During this step, the ribosome changes from the pre-translocational (PRE) to the post-translocational (POST) state as the newly formed A-site-bound peptidyl-tRNA and P-site-bound deacylated tRNA move to the P and E sites, respectively. Catalyzes the coordinated movement of the two tRNA molecules, the mRNA and conformational changes in the ribosome. The sequence is that of Elongation factor G from Chlamydia caviae (strain ATCC VR-813 / DSM 19441 / 03DC25 / GPIC) (Chlamydophila caviae).